The chain runs to 270 residues: dTDP-6-deoxy-L-talose 4-dehydrogenase (NAD(+)) (270 aa).

NAD(+)-binding positions include 11–12 (YI), 50–51 (DI), 72–76 (LAWQA), N87, T112, Y135, and K139. Substrate-binding residues include T112 and Y135. Y135 functions as the Proton acceptor in the catalytic mechanism.

Belongs to the NAD(P)-dependent epimerase/dehydratase family.

It carries out the reaction dTDP-6-deoxy-beta-L-talose + NAD(+) = dTDP-4-dehydro-beta-L-rhamnose + NADH + H(+). The protein operates within bacterial outer membrane biogenesis; LPS O-antigen biosynthesis. In terms of biological role, catalyzes the reduction of dTDP-6-deoxy-L-lyxo-4-hexulose to dTDP-6-deoxy-L-talose. In Aggregatibacter actinomycetemcomitans (Actinobacillus actinomycetemcomitans), this protein is dTDP-6-deoxy-L-talose 4-dehydrogenase (NAD(+)) (tll).